We begin with the raw amino-acid sequence, 511 residues long: Sphingosine-1-phosphate transporter MFSD2B (511 aa).

9 helical membrane-spanning segments follow: residues 108-128 (MPWM…LWFV), 136-156 (VLWY…YHVP), 236-256 (IAAG…FLGV), 280-300 (TMQF…SAAV), 323-343 (NLVL…QWFL), 357-377 (LMIP…AYVV), 379-399 (VASG…LPDV), 415-435 (AIFY…ALGI), and 462-482 (LLIG…LAFY).

Belongs to the major facilitator superfamily.

It is found in the cell membrane. The catalysed reaction is sphing-4-enine 1-phosphate(in) = sphing-4-enine 1-phosphate(out). It carries out the reaction sphinganine 1-phosphate(in) = sphinganine 1-phosphate(out). It catalyses the reaction sphinga-4E,14Z-dienine-1-phosphate(in) = sphinga-4E,14Z-dienine-1-phosphate(out). Lipid transporter that specifically mediates export of sphingosine-1-phosphate in red blood cells and platelets. Sphingosine-1-phosphate is a signaling sphingolipid and its export from red blood cells into in the plasma is required for red blood cell morphology. Sphingosine-1-phosphate export from platelets is required for platelet aggregation and thrombus formation. In addition to export, also able to mediate S1P import. The sequence is that of Sphingosine-1-phosphate transporter MFSD2B from Xenopus tropicalis (Western clawed frog).